The sequence spans 1715 residues: Protein PHYLLO, chloroplastic (1715 aa).

The N-terminal 19 residues, 1-19 (MRSSFLVSNPPFLPSLIPR), are a transit peptide targeting the chloroplast. The tract at residues 20-273 (YSSRKSIRRS…EKSIFQVSSH (254 aa)) is inactive isochorismate synthase. Positions 363 to 933 (NAVWASAIIE…GTKSELEDAL (571 aa)) are 2-succinyl-5-enolpyruvyl-6-hydroxy-3-cyclohexene-1-carboxylate synthase. Residues 429–449 (AVIITSSGTAVSNLLPAVVEA) traverse the membrane as a helical segment. The segment at 981–1364 (FLHPMIKNVL…SEDVMMNTLG (384 aa)) is O-succinylbenzoate synthase. Lysine 1170 (proton donor; for the o-succinylbenzoate synthase activity) is an active-site residue. 3 residues coordinate Mg(2+): aspartate 1202, glutamate 1228, and aspartate 1251. The Proton acceptor; for the o-succinylbenzoate synthase activity role is filled by lysine 1279. Residues 1418 to 1715 (HFIRVHDVGE…QKLLLALKEM (298 aa)) are 2-succinyl-6-hydroxy-2,4-cyclohexadiene-1-carboxylate synthase. The AB hydrolase-1 domain occupies 1435–1540 (LFLHGFLGTG…EGAVVVSGSP (106 aa)).

It in the N-terminal section; belongs to the isochorismate synthase family. This sequence in the 2nd section; belongs to the TPP enzyme family. MenD subfamily. In the 3rd section; belongs to the mandelate racemase/muconate lactonizing enzyme family. MenC type 1 subfamily. The protein in the C-terminal section; belongs to the AB hydrolase superfamily. MenH family. Mg(2+) serves as cofactor. Requires Mn(2+) as cofactor. The cofactor is thiamine diphosphate.

The protein localises to the plastid. It localises to the chloroplast membrane. The catalysed reaction is isochorismate + 2-oxoglutarate + H(+) = 5-enolpyruvoyl-6-hydroxy-2-succinyl-cyclohex-3-ene-1-carboxylate + CO2. It catalyses the reaction (1R,6R)-6-hydroxy-2-succinyl-cyclohexa-2,4-diene-1-carboxylate = 2-succinylbenzoate + H2O. It carries out the reaction 5-enolpyruvoyl-6-hydroxy-2-succinyl-cyclohex-3-ene-1-carboxylate = (1R,6R)-6-hydroxy-2-succinyl-cyclohexa-2,4-diene-1-carboxylate + pyruvate. Its function is as follows. Multifunctional enzyme required for phylloquinone (vitamin K1) biosynthesis. In Arabidopsis thaliana (Mouse-ear cress), this protein is Protein PHYLLO, chloroplastic (PHYLLO).